Consider the following 313-residue polypeptide: Type II restriction enzyme BsuMI component YdiR (313 aa).

Residues 289–313 form a disordered region; that stretch reads FVSGDIVDENATTSSDDLPEDFENN.

BsuMI restriction activity requires YdiR, YdiS and YdjA.

The enzyme catalyses Endonucleolytic cleavage of DNA to give specific double-stranded fragments with terminal 5'-phosphates.. Its function is as follows. A P subtype restriction enzyme that recognizes the double-stranded sequence 5'-CTCGAG-3'; the cleavage site is unknown. The chain is Type II restriction enzyme BsuMI component YdiR (ydiR) from Bacillus subtilis (strain 168).